The chain runs to 140 residues: Glycine cleavage system H protein (140 aa).

The Lipoyl-binding domain occupies 22–104 (EVVIGITRFA…YGKGWMLRLK (83 aa)). An N6-lipoyllysine modification is found at lysine 63.

This sequence belongs to the GcvH family. In terms of assembly, the glycine cleavage system is composed of four proteins: P, T, L and H. (R)-lipoate is required as a cofactor.

In terms of biological role, the glycine cleavage system catalyzes the degradation of glycine. The H protein shuttles the methylamine group of glycine from the P protein to the T protein. The polypeptide is Glycine cleavage system H protein (Magnetococcus marinus (strain ATCC BAA-1437 / JCM 17883 / MC-1)).